A 305-amino-acid chain; its full sequence is Serine/threonine-protein phosphatase PP-X homolog 3 (305 aa).

The Mn(2+) site is built by D53, H55, D81, and N113. H114 serves as the catalytic Proton donor. H163 and H237 together coordinate Mn(2+).

Belongs to the PPP phosphatase family. PP-4 (PP-X) subfamily. The cofactor is Mn(2+).

It carries out the reaction O-phospho-L-seryl-[protein] + H2O = L-seryl-[protein] + phosphate. The enzyme catalyses O-phospho-L-threonyl-[protein] + H2O = L-threonyl-[protein] + phosphate. The polypeptide is Serine/threonine-protein phosphatase PP-X homolog 3 (Ppx3) (Paramecium tetraurelia).